The sequence spans 82 residues: Diphthamide biosynthesis protein 3 (82 aa).

A DPH-type MB domain is found at 8 to 64; that stretch reads IYDEVEIEDMTYDPALQTYSYPCPCGDKFEIALADLQDGQDIAVCPSCSLMVRVIFE. Fe cation is bound by residues Cys30, Cys32, Cys52, and Cys55.

Belongs to the DPH3 family. In terms of assembly, component of the 2-(3-amino-3-carboxypropyl)histidine synthase complex composed of dph-1, dph-2, dph-3 and a NADH-dependent reductase, predominantly cbr-1. Fe(2+) serves as cofactor.

The protein resides in the cytoplasm. It localises to the nucleus. The catalysed reaction is [3Fe-4S](1+)-[protein] + Fe(2+)-[Dph3] = [3Fe-4S](0)-[protein] + Fe(3+)-[Dph3]. It catalyses the reaction 2 [3Fe-4S](0)-[protein] + 2 Fe(2+)-[Dph3] + NADH = 2 [4Fe-4S](1+)-[protein] + 2 [Dph3] + NAD(+) + H(+). It participates in protein modification; peptidyl-diphthamide biosynthesis. In terms of biological role, required for the first step of diphthamide biosynthesis, a post-translational modification of histidine which occurs in elongation factor 2. Dph-1 and dph-2 transfer a 3-amino-3-carboxypropyl (ACP) group from S-adenosyl-L-methionine (SAM) to a histidine residue, the reaction is assisted by a reduction system comprising dph-3 and a NADH-dependent reductase, predominantly cbr-1. Acts as an electron donor to reduce the Fe-S cluster in dph1-dph2 keeping the [4Fe-4S] clusters in the active and reduced state. Restores iron to dph-1-dph-2 iron-sulfur clusters which have degraded from [4Fe-4S] to [3Fe-4S] by donating an iron atom to reform [4Fe-4S] clusters, in a manner dependent on the presence of elongation factor 2 and SAM. Associates with the elongator complex and is required for tRNA Wobble base modifications mediated by the elongator complex. The elongator complex is required for multiple tRNA modifications, including mcm5U (5-methoxycarbonylmethyl uridine), mcm5s 2U (5-methoxycarbonylmethyl-2-thiouridine), and ncm5U (5-carbamoylmethyl uridine). The protein is Diphthamide biosynthesis protein 3 (dph-3) of Neurospora crassa (strain ATCC 24698 / 74-OR23-1A / CBS 708.71 / DSM 1257 / FGSC 987).